Reading from the N-terminus, the 563-residue chain is 5-aminolevulinate synthase, mitochondrial (563 aa).

The transit peptide at 1–18 (MESLVRQSKKLCPYIGRT) directs the protein to the mitochondrion. Substrate-binding residues include R137, S251, and K270. Pyridoxal 5'-phosphate is bound by residues S303, H331, and T373. The active site involves K376. K376 is subject to N6-(pyridoxal phosphate)lysine. Residues T405 and T406 each coordinate pyridoxal 5'-phosphate. T491 lines the substrate pocket.

It belongs to the class-II pyridoxal-phosphate-dependent aminotransferase family. In terms of assembly, homodimer. Pyridoxal 5'-phosphate is required as a cofactor.

It is found in the mitochondrion matrix. It catalyses the reaction succinyl-CoA + glycine + H(+) = 5-aminolevulinate + CO2 + CoA. It participates in porphyrin-containing compound metabolism; protoporphyrin-IX biosynthesis; 5-aminolevulinate from glycine: step 1/1. Catalyzes the synthesis of 5-aminolevulinate (ALA) from succinyl-CoA and glycine, the first and rate-limiting step in heme biosynthesis. The sequence is that of 5-aminolevulinate synthase, mitochondrial (HEM1) from Yarrowia lipolytica (strain CLIB 122 / E 150) (Yeast).